The sequence spans 662 residues: MRPSVLVQTSSIVSSALVSSAIGYAIGWPVSKYFDSNTTMRLLLSPVIGLGIFGAVAVSIFHFLPITAINLMLIVLGLSAVAFWLSKGTIDPLLRSPASPGFCWFTVAFLLCLLPAFEIIPQHYGGSVGVGHPIWDHAKIAIVNEIAQNGLPPANPFHSEAGSPNTLIYYYVWHFIAACSSVITGATGWEADIALTGMTALFSTFVVTWLAVARSRSAYAAWWSLPLLFVGSLKPAVRFVFGKWLEKWMAPEHGLQTWIIQAPWVPQHVFSGTLALIAIMAYLRILYSNAGRNMALAVFMGAILASAYGSSMWAGSLSLLLILPLVGALSVSHVLKVKRLLEVLISLSVTVVITLLCAAVLIREQSAILHTRKVVEFWVFPIFAGDYWFLDIPGFWLVLVFLEFGIIYLSFLIWSFARPSDDSKRYAHIDCALTVSVLAPLFCTQILHSVIMYNDLGWRVLIPSMLVMTALTSGLFSTTIGKGTLVGRLTTITAIILLAPSILVGAKSVYSNTFKFQVEGPDSEEGTAFKASPEMWKAVREVTPPNEAVANNPLDLASVTYTPANISWAILSQRRHCGTTLDFLRAYAAQLTPKKASEIYNFFVRAFAGLATEDHLRIMKEKYRCRTLVVTSRDGLWGKPVLDNNSVYKLVSEKKGKWRIYR.

The next 16 membrane-spanning stretches (helical) occupy residues 10–30, 46–66, 68–88, 101–121, 167–187, 193–213, 217–237, 263–283, 285–305, 312–332, 342–362, 373–393, 394–414, 432–452, 460–480, and 485–505; these read SSIVSSALVSSAIGYAIGWPV, PVIGLGIFGAVAVSIFHFLPI, AINLMLIVLGLSAVAFWLSKG, GFCWFTVAFLLCLLPAFEIIP, LIYYYVWHFIAACSSVITGAT, IALTGMTALFSTFVVTWLAVA, SAYAAWWSLPLLFVGSLKPAV, PWVPQHVFSGTLALIAIMAYL, ILYSNAGRNMALAVFMGAILA, MWAGSLSLLLILPLVGALSVS, EVLISLSVTVVITLLCAAVLI, KVVEFWVFPIFAGDYWFLDIP, GFWLVLVFLEFGIIYLSFLIW, ALTVSVLAPLFCTQILHSVIM, VLIPSMLVMTALTSGLFSTTI, and LVGRLTTITAIILLAPSILVG.

The protein localises to the cell membrane. This is an uncharacterized protein from Sinorhizobium fredii (strain NBRC 101917 / NGR234).